An 80-amino-acid chain; its full sequence is Serine rich endogenous peptide 18 (80 aa).

The N-terminal stretch at 1 to 25 (MYNVVVCLLTLSFLLLTGLSNTAEA) is a signal peptide. The short motif at 45–59 (KAEVGGSCSPHAHGR) is the SCOOP motif element. A disordered region spans residues 50-80 (GSCSPHAHGRGPPNRPGSSNIPGSPKRCTKP). Residues 51–53 (SCS) carry the SxS motif essential for MIK2 binding motif.

Belongs to the serine rich endogenous peptide (SCOOP) phytocytokine family. As to quaternary structure, interacts with MIK2 (via extracellular leucine-rich repeat domain); this interaction triggers the formation of complex between MIK2 and the BAK1/SERK3 and SERK4 coreceptors, and subsequent BAK1 activation by phosphorylation.

It localises to the cell membrane. The protein resides in the secreted. The protein localises to the extracellular space. It is found in the apoplast. Brassicaceae-specific phytocytokine (plant endogenous peptide released into the apoplast) perceived by MIK2 in a BAK1/SERK3 and SERK4 coreceptors-dependent manner, that modulates various physiological and antimicrobial processes including growth prevention and reactive oxygen species (ROS) response regulation. The polypeptide is Serine rich endogenous peptide 18 (Arabidopsis thaliana (Mouse-ear cress)).